Consider the following 205-residue polypeptide: MLAVFLQGFALSAAMILPLGPQNVFVMNQGIRRQYHLMVASLCALSDIVLICGGIFGGSALLSRSPLLLALVTWGGVAFLLWYGWGAFRTAFSRQLALATAEELKQSRWRLVVTMLAVTWLNPHVYLDTFVVLGSLGGQLTPDVRSWFALGAVSASVVWFFALALLASWLAPWLKTQMAQRIINTLVGVVMWGIALQLAWQGASL.

The next 6 helical transmembrane spans lie at 1-21 (MLAV…PLGP), 37-57 (LMVA…GIFG), 68-88 (LLAL…WGAF), 112-132 (VVTM…TFVV), 147-167 (WFAL…ALLA), and 182-202 (IINT…AWQG).

This sequence belongs to the LysE/ArgO transporter (TC 2.A.75) family.

Its subcellular location is the cell inner membrane. The enzyme catalyses L-arginine(in) = L-arginine(out). In terms of biological role, involved in the export of arginine. Important to control the intracellular level of arginine and the correct balance between arginine and lysine. The polypeptide is Arginine exporter protein ArgO (Serratia proteamaculans (strain 568)).